The chain runs to 228 residues: Max-interacting protein 1 (228 aa).

2 disordered regions span residues 30–76 and 160–228; these read YASS…NELE and SIGS…SFAS. Residues 43–56 show a composition bias toward basic residues; that stretch reads QHSKPPRRLSRAQK. Positions 57–70 are enriched in polar residues; the sequence is HSSGSSNTSTANRS. One can recognise a bHLH domain in the interval 67–119; sequence ANRSTHNELEKNRRAHLRLCLERLKVLIPLGPDCTRHTTLGLLNKAKAHIKKL. The segment covering 173–183 has biased composition (acidic residues); it reads EREEIEVDVES. Polar residues predominate over residues 207 to 228; that stretch reads SLQSVGSDEGYSSASVKLSFAS.

Efficient DNA binding requires dimerization with another bHLH protein. Binds DNA as a heterodimer with MAX. Interacts with SMC3. Interacts with RNF17.

It is found in the nucleus. Its function is as follows. Transcriptional repressor. MXI1 binds with MAX to form a sequence-specific DNA-binding protein complex which recognizes the core sequence 5'-CAC[GA]TG-3'. MXI1 thus antagonizes MYC transcriptional activity by competing for MAX. Isoform Short, which lacks a segment, has a much stronger suppressive potential and associates with a SIN3 homologous protein. The chain is Max-interacting protein 1 (Mxi1) from Mus musculus (Mouse).